A 65-amino-acid chain; its full sequence is UPF0434 protein bsr0601 (65 aa).

This sequence belongs to the UPF0434 family.

This chain is UPF0434 protein bsr0601, found in Bradyrhizobium diazoefficiens (strain JCM 10833 / BCRC 13528 / IAM 13628 / NBRC 14792 / USDA 110).